Reading from the N-terminus, the 400-residue chain is Canavanine gamma-lyase (400 aa).

N6-(pyridoxal phosphate)lysine is present on lysine 213.

The protein belongs to the trans-sulfuration enzymes family. It depends on pyridoxal 5'-phosphate as a cofactor.

The enzyme catalyses L-canavanine + H2O = N-hydroxyguanidine + L-homoserine. Its function is as follows. Lyase involved in the degradation of canavanine, the delta-oxa-analog of arginine, allowing growth on canavanine as sole nitrogen and carbon source. Catalyzes the elimination of hydroxyguanidine from canavanine with a subsequent water addition to yield homoserine. Is highly specific for canavanine and cannot use methionine, cystathionine or arginine. The sequence is that of Canavanine gamma-lyase from Pseudomonas canavaninivorans.